We begin with the raw amino-acid sequence, 907 residues long: Valine--tRNA ligase (907 aa).

The 'HIGH' region motif lies at 45 to 55 (PNVTGSLHMGH). The 'KMSKS' region signature appears at 554–558 (KMSKS). Lys-557 provides a ligand contact to ATP. The stretch at 838–870 (GQLIDLEAERARLVKNVSKIEQDIEKISVKLNN) forms a coiled coil.

This sequence belongs to the class-I aminoacyl-tRNA synthetase family. ValS type 1 subfamily. As to quaternary structure, monomer.

It localises to the cytoplasm. It catalyses the reaction tRNA(Val) + L-valine + ATP = L-valyl-tRNA(Val) + AMP + diphosphate. Functionally, catalyzes the attachment of valine to tRNA(Val). As ValRS can inadvertently accommodate and process structurally similar amino acids such as threonine, to avoid such errors, it has a 'posttransfer' editing activity that hydrolyzes mischarged Thr-tRNA(Val) in a tRNA-dependent manner. This chain is Valine--tRNA ligase, found in Bartonella quintana (strain Toulouse) (Rochalimaea quintana).